Reading from the N-terminus, the 446-residue chain is Signal recognition particle 54 kDa protein (446 aa).

GTP is bound by residues 104–111, 184–188, and 242–245; these read GLQGSGKT, DTAGR, and TKMD.

This sequence belongs to the GTP-binding SRP family. SRP54 subfamily. Part of the signal recognition particle protein translocation system, which is composed of SRP and FtsY. Archaeal SRP consists of a 7S RNA molecule of 300 nucleotides and two protein subunits: SRP54 and SRP19.

Its subcellular location is the cytoplasm. The enzyme catalyses GTP + H2O = GDP + phosphate + H(+). In terms of biological role, involved in targeting and insertion of nascent membrane proteins into the cytoplasmic membrane. Binds to the hydrophobic signal sequence of the ribosome-nascent chain (RNC) as it emerges from the ribosomes. The SRP-RNC complex is then targeted to the cytoplasmic membrane where it interacts with the SRP receptor FtsY. The polypeptide is Signal recognition particle 54 kDa protein (Methanocorpusculum labreanum (strain ATCC 43576 / DSM 4855 / Z)).